The following is a 256-amino-acid chain: Enkurin (256 aa).

The SH3-binding motif lies at 83-89; it reads PKKPAVP. The Enkurin domain occupies 160–252; it reads KRNEEIKKAQ…IIEKHKIIYI (93 aa). An interaction with TRPC proteins region spans residues 160–255; sequence KRNEEIKKAQ…KHKIIYIANN (96 aa). The IQ domain maps to 176 to 187; that stretch reads IQENLKKAAMKR.

Microtubule inner protein component of sperm flagellar doublet microtubules. Binds calmodulin via its IQ domain. Interacts with TRPC1, TRPC2, TRPC5, but not TRPC3. Interacts with CFAP45. As to expression, expressed in airway epithelial cells.

It is found in the cytoplasm. Its subcellular location is the cytoskeleton. The protein localises to the cilium axoneme. It localises to the flagellum axoneme. Its function is as follows. Adapter that functions to localize a calcium-sensitive signal transduction machinery in sperm to a calcium-permeable ion channel. Microtubule inner protein (MIP) part of the dynein-decorated doublet microtubules (DMTs) in cilia axoneme, which is required for motile cilia beating. The sequence is that of Enkurin from Homo sapiens (Human).